The primary structure comprises 79 residues: Conotoxin Leo-O1 (79 aa).

A signal peptide spans 1 to 22 (MKLTCMMLVAVLFLTAWTFVTA). A propeptide spanning residues 23-51 (NVSRNGLENLFPEERHEMMNPEAAKLNNR) is cleaved from the precursor. 3 disulfide bridges follow: Cys-53–Cys-70, Cys-60–Cys-74, and Cys-69–Cys-78.

The protein belongs to the conotoxin O1 superfamily. Expressed by the venom duct.

The protein localises to the secreted. The sequence is that of Conotoxin Leo-O1 from Conus leopardus (Leopard cone).